Consider the following 325-residue polypeptide: Diacylglycerol acyltransferase/mycolyltransferase Ag85B (325 aa).

The N-terminal stretch at 1-38 (MTFIDKIRGHWARRMTVAAVAALLLPGLVGVVGGSATA) is a signal peptide. Residue 82–83 (LR) coordinates substrate. The tract at residues 98–108 (FEMFLDSGLSV) is fibronectin-binding. Cys127 and Cys132 are disulfide-bonded. Ser166 is a binding site for substrate. The active-site Nucleophile is Ser166. The active site involves Glu272. Residues 274-277 (LTIR) and 304-306 (HNW) contribute to the substrate site. Residue His304 is part of the active site.

The protein belongs to the mycobacterial A85 antigen family.

Its subcellular location is the secreted. It carries out the reaction 2 alpha,alpha'-trehalose 6-mycolate = alpha,alpha'-trehalose 6,6'-bismycolate + alpha,alpha-trehalose. The enzyme catalyses an acyl-CoA + a 1,2-diacyl-sn-glycerol = a triacyl-sn-glycerol + CoA. Functionally, the antigen 85 proteins (FbpA, FbpB, FbpC) are responsible for the high affinity of mycobacteria for fibronectin, a large adhesive glycoprotein. They also help to maintain the integrity of the cell wall by catalyzing the transfer of mycolic acids to cell wall arabinogalactan and through the synthesis of alpha,alpha-trehalose dimycolate (TDM, cord factor). They catalyze the transfer of a mycoloyl residue from one molecule of alpha,alpha-trehalose monomycolate (TMM) to another TMM, leading to the formation of TDM. In Mycolicibacterium smegmatis (strain ATCC 700084 / mc(2)155) (Mycobacterium smegmatis), this protein is Diacylglycerol acyltransferase/mycolyltransferase Ag85B (fbpB).